The following is a 574-amino-acid chain: DNA-directed primase/polymerase protein (574 aa).

Residues 2-22 (KRKWEERVKKVEELASYYERN) are a coiled coil. Residues Arg76, 116–118 (DLE), 167–171 (KFSRH), 291–294 (RNFR), and Lys300 contribute to the substrate site. Residues Asp116 and Glu118 each contribute to the Mn(2+) site. 4 residues coordinate Zn(2+): Cys424, His431, Cys451, and Cys456. Positions 424-457 (CENIGRAHRSNNIMILVDLKKEVWYQKCHDPVCR) match the Zinc knuckle motif motif.

It belongs to the eukaryotic-type primase small subunit family. It depends on Mn(2+) as a cofactor.

It is found in the nucleus. Its subcellular location is the mitochondrion matrix. The protein resides in the chromosome. The catalysed reaction is ssDNA + n NTP = ssDNA/pppN(pN)n-1 hybrid + (n-1) diphosphate.. It carries out the reaction DNA(n) + a 2'-deoxyribonucleoside 5'-triphosphate = DNA(n+1) + diphosphate. In terms of biological role, DNA primase and DNA polymerase required to tolerate replication-stalling lesions by bypassing them. Required to facilitate mitochondrial and nuclear replication fork progression by initiating de novo DNA synthesis using dNTPs and acting as an error-prone DNA polymerase able to bypass certain DNA lesions. Shows a high capacity to tolerate DNA damage lesions such as 8oxoG and abasic sites in DNA. Provides different translesion synthesis alternatives when DNA replication is stalled: able to synthesize DNA primers downstream of lesions, such as UV lesions, R-loops and G-quadruplexes, to allow DNA replication to continue. Can also realign primers ahead of 'unreadable lesions' such as abasic sites and 6-4 photoproduct (6-4 pyrimidine-pyrimidinone), thereby skipping the lesion. Repriming avoids fork degradation while leading to accumulation of internal ssDNA gaps behind the forks. Also able to incorporate nucleotides opposite DNA lesions such as 8oxoG, like a regular translesion synthesis DNA polymerase. Also required for reinitiating stalled forks after ultraviolet (UV) damage during nuclear DNA replication. Required for mitochondrial DNA (mtDNA) synthesis and replication, by reinitiating synthesis after UV damage or in the presence of chain-terminating nucleotides. In addition to its role in DNA damage response, also required to maintain efficient nuclear and mitochondrial DNA replication in unperturbed cells. In Gallus gallus (Chicken), this protein is DNA-directed primase/polymerase protein.